The chain runs to 314 residues: DNA-directed RNA polymerase subunit alpha (314 aa).

The alpha N-terminal domain (alpha-NTD) stretch occupies residues 1-228 (MIEIEKPRIE…EHLNIFVGLT (228 aa)). The interval 245-314 (KEKVLEMSIE…DLGLGLRKED (70 aa)) is alpha C-terminal domain (alpha-CTD).

It belongs to the RNA polymerase alpha chain family. In terms of assembly, homodimer. The RNAP catalytic core consists of 2 alpha, 1 beta, 1 beta' and 1 omega subunit. When a sigma factor is associated with the core the holoenzyme is formed, which can initiate transcription.

The enzyme catalyses RNA(n) + a ribonucleoside 5'-triphosphate = RNA(n+1) + diphosphate. DNA-dependent RNA polymerase catalyzes the transcription of DNA into RNA using the four ribonucleoside triphosphates as substrates. The protein is DNA-directed RNA polymerase subunit alpha of Staphylococcus haemolyticus (strain JCSC1435).